The primary structure comprises 614 residues: Heat shock protein SSB1 (614 aa).

A nucleotide binding domain (NBD) region spans residues 1–392; sequence MSTEVYDGAI…ILSGKATSAE (392 aa). Residues 16 to 18, Lys-74, 206 to 208, 272 to 279, and Gly-343 each bind ATP; these read TTY, GGT, and ERAKRTLS. The interval 393–403 is inter-domain linker; it reads TADLLLLDVVP. The substrate binding domain (SBD) stretch occupies residues 404–614; sequence LSLGVAMEGN…RAVTKAMSSR (211 aa). The tract at residues 517–613 is lid domain (SBDalpha); it reads TSEIENMISE…KRAVTKAMSS (97 aa). Positions 575 to 583 match the Nuclear export signal motif; the sequence is IENTMSEAM.

The protein belongs to the heat shock protein 70 family. As to quaternary structure, interacts with HAT1 in starvation conditions.

It localises to the nucleus. The protein resides in the cytoplasm. The enzyme catalyses ATP + H2O = ADP + phosphate + H(+). Its function is as follows. Chaperone that interacts with the histone acetyltransferase HAT1 and mediates its translocation from the nucleus to the cytoplasm during germination and starvation conditions. Within the cytoplasm, HAT1 regulates autophagy via acetylation of the autophagy-related proteins ATG3 and ATG9. The chain is Heat shock protein SSB1 from Pyricularia oryzae (strain 70-15 / ATCC MYA-4617 / FGSC 8958) (Rice blast fungus).